The chain runs to 492 residues: N-succinylglutamate 5-semialdehyde dehydrogenase (492 aa).

Residue 220–225 (GSASTG) participates in NAD(+) binding. Active-site residues include Glu-243 and Cys-277.

Belongs to the aldehyde dehydrogenase family. AstD subfamily.

It carries out the reaction N-succinyl-L-glutamate 5-semialdehyde + NAD(+) + H2O = N-succinyl-L-glutamate + NADH + 2 H(+). Its pathway is amino-acid degradation; L-arginine degradation via AST pathway; L-glutamate and succinate from L-arginine: step 4/5. Functionally, catalyzes the NAD-dependent reduction of succinylglutamate semialdehyde into succinylglutamate. The polypeptide is N-succinylglutamate 5-semialdehyde dehydrogenase (Salmonella agona (strain SL483)).